The sequence spans 500 residues: Endothelial lipase (500 aa).

The N-terminal stretch at M1 to G20 is a signal peptide. A disulfide bridge links C64 with C77. N80 and N136 each carry an N-linked (GlcNAc...) asparagine glycan. Residue S169 is the Nucleophile of the active site. D193 functions as the Charge relay system in the catalytic mechanism. C252 and C272 are disulfide-bonded. The active-site Charge relay system is H274. Disulfide bonds link C297–C316 and C308–C311. Position 325–337 (K325–K337) interacts with heparin. A PLAT domain is found at Y347 to K482. N-linked (GlcNAc...) asparagine glycosylation is found at N393, N469, and N491. A disulfide bridge links C463 with C483.

The protein belongs to the AB hydrolase superfamily. Lipase family. As to quaternary structure, head to tail homodimer. As to expression, high level of expression in the liver, placenta, lung, thyroid, kidney, testis and in the corpus luteum of the ovary. Expressed also in coronary artery endothelial cells, umbilical vein endothelial cells and in hepatocytes and osteosarcoma cell lines. Not detected in heart, brain and muscle.

It is found in the secreted. It catalyses the reaction a triacylglycerol + H2O = a diacylglycerol + a fatty acid + H(+). The catalysed reaction is a 1,2-diacyl-sn-glycero-3-phosphocholine + H2O = a 2-acyl-sn-glycero-3-phosphocholine + a fatty acid + H(+). The enzyme catalyses 1,2,3-tri-(9Z-octadecenoyl)-glycerol + H2O = di-(9Z)-octadecenoylglycerol + (9Z)-octadecenoate + H(+). It carries out the reaction 1,2,3-tributanoylglycerol + H2O = dibutanoylglycerol + butanoate + H(+). It catalyses the reaction 1,2-dihexadecanoyl-sn-glycero-3-phosphocholine + H2O = hexadecanoyl-sn-glycero-3-phosphocholine + hexadecanoate + H(+). With respect to regulation, inhibited by serum and NaCl. Functionally, exerts both phospholipase and triglyceride lipase activities. More active as a phospholipase than a triglyceride lipase. Hydrolyzes triglycerides, both with short-chain fatty acyl groups (tributyrin) and long-chain fatty acyl groups (triolein) with similar levels of activity toward both types of substrates. Hydrolyzes high density lipoproteins (HDL) more efficiently than other lipoproteins. The sequence is that of Endothelial lipase (LIPG) from Homo sapiens (Human).